The chain runs to 160 residues: Cytochrome b6-f complex subunit 4 (160 aa).

A run of 3 helical transmembrane segments spans residues 36–56, 95–115, and 131–151; these read LLYI…GLAV, LLGV…PFLE, and TVFL…ALPI.

It belongs to the cytochrome b family. PetD subfamily. The 4 large subunits of the cytochrome b6-f complex are cytochrome b6, subunit IV (17 kDa polypeptide, petD), cytochrome f and the Rieske protein, while the 4 small subunits are petG, petL, petM and petN. The complex functions as a dimer.

Its subcellular location is the plastid. The protein localises to the chloroplast thylakoid membrane. Functionally, component of the cytochrome b6-f complex, which mediates electron transfer between photosystem II (PSII) and photosystem I (PSI), cyclic electron flow around PSI, and state transitions. In Physcomitrium patens (Spreading-leaved earth moss), this protein is Cytochrome b6-f complex subunit 4.